We begin with the raw amino-acid sequence, 139 residues long: Large ribosomal subunit protein uL22 (139 aa).

Positions 1–22 are disordered; sequence MVSENEKTRRPKRSIQHRQNKD. Residues 9 to 18 show a composition bias toward basic residues; the sequence is RRPKRSIQHR.

It belongs to the universal ribosomal protein uL22 family. As to quaternary structure, part of the 50S ribosomal subunit.

Functionally, this protein binds specifically to 23S rRNA; its binding is stimulated by other ribosomal proteins, e.g. L4, L17, and L20. It is important during the early stages of 50S assembly. It makes multiple contacts with different domains of the 23S rRNA in the assembled 50S subunit and ribosome. The globular domain of the protein is located near the polypeptide exit tunnel on the outside of the subunit, while an extended beta-hairpin is found that lines the wall of the exit tunnel in the center of the 70S ribosome. The sequence is that of Large ribosomal subunit protein uL22 from Pseudothermotoga lettingae (strain ATCC BAA-301 / DSM 14385 / NBRC 107922 / TMO) (Thermotoga lettingae).